The primary structure comprises 208 residues: Redox-sensing transcriptional repressor Rex (208 aa).

The H-T-H motif DNA-binding region spans 15–54 (SYYMCLERLLDEGVEVVSSEELARRLDLKASQIRKDLSYF). 89–94 (GAGNIG) contacts NAD(+).

The protein belongs to the transcriptional regulatory Rex family. As to quaternary structure, homodimer.

It is found in the cytoplasm. Its function is as follows. Modulates transcription in response to changes in cellular NADH/NAD(+) redox state. The sequence is that of Redox-sensing transcriptional repressor Rex from Thermotoga petrophila (strain ATCC BAA-488 / DSM 13995 / JCM 10881 / RKU-1).